A 66-amino-acid chain; its full sequence is Large ribosomal subunit protein bL35 (66 aa).

The interval 1-42 (MPKQKTHRASAKRFKRTANGGLKRHHAYTGHRFHGKTKKQRR) is disordered.

The protein belongs to the bacterial ribosomal protein bL35 family.

The chain is Large ribosomal subunit protein bL35 from Lactobacillus gasseri (strain ATCC 33323 / DSM 20243 / BCRC 14619 / CIP 102991 / JCM 1131 / KCTC 3163 / NCIMB 11718 / NCTC 13722 / AM63).